We begin with the raw amino-acid sequence, 386 residues long: 1-deoxy-D-xylulose 5-phosphate reductoisomerase (386 aa).

NADPH-binding residues include threonine 13, glycine 14, serine 15, isoleucine 16, asparagine 40, and asparagine 122. Lysine 123 contacts 1-deoxy-D-xylulose 5-phosphate. Glutamate 124 serves as a coordination point for NADPH. Aspartate 148 lines the Mn(2+) pocket. 1-deoxy-D-xylulose 5-phosphate contacts are provided by serine 149, glutamate 150, serine 177, and histidine 201. Glutamate 150 is a Mn(2+) binding site. Glycine 207 provides a ligand contact to NADPH. 4 residues coordinate 1-deoxy-D-xylulose 5-phosphate: serine 214, asparagine 219, lysine 220, and glutamate 223. Glutamate 223 is a binding site for Mn(2+).

The protein belongs to the DXR family. It depends on Mg(2+) as a cofactor. The cofactor is Mn(2+).

It carries out the reaction 2-C-methyl-D-erythritol 4-phosphate + NADP(+) = 1-deoxy-D-xylulose 5-phosphate + NADPH + H(+). The protein operates within isoprenoid biosynthesis; isopentenyl diphosphate biosynthesis via DXP pathway; isopentenyl diphosphate from 1-deoxy-D-xylulose 5-phosphate: step 1/6. In terms of biological role, catalyzes the NADPH-dependent rearrangement and reduction of 1-deoxy-D-xylulose-5-phosphate (DXP) to 2-C-methyl-D-erythritol 4-phosphate (MEP). In Francisella tularensis subsp. holarctica (strain OSU18), this protein is 1-deoxy-D-xylulose 5-phosphate reductoisomerase.